A 246-amino-acid chain; its full sequence is 1-(5-phosphoribosyl)-5-[(5-phosphoribosylamino)methylideneamino] imidazole-4-carboxamide isomerase (246 aa).

The active-site Proton acceptor is the aspartate 12. The active-site Proton donor is aspartate 134.

This sequence belongs to the HisA/HisF family.

The protein resides in the cytoplasm. It catalyses the reaction 1-(5-phospho-beta-D-ribosyl)-5-[(5-phospho-beta-D-ribosylamino)methylideneamino]imidazole-4-carboxamide = 5-[(5-phospho-1-deoxy-D-ribulos-1-ylimino)methylamino]-1-(5-phospho-beta-D-ribosyl)imidazole-4-carboxamide. Its pathway is amino-acid biosynthesis; L-histidine biosynthesis; L-histidine from 5-phospho-alpha-D-ribose 1-diphosphate: step 4/9. The chain is 1-(5-phosphoribosyl)-5-[(5-phosphoribosylamino)methylideneamino] imidazole-4-carboxamide isomerase from Haloarcula marismortui (strain ATCC 43049 / DSM 3752 / JCM 8966 / VKM B-1809) (Halobacterium marismortui).